The sequence spans 173 residues: Flagellar biosynthetic protein FliV (173 aa).

It belongs to the FliB family.

Functionally, required for the secretion of flagellin and expression of motility. The chain is Flagellar biosynthetic protein FliV (fliV) from Salmonella muenchen.